The chain runs to 146 residues: Probable glycine cleavage system H protein 3 (146 aa).

In terms of domain architecture, Lipoyl-binding spans 29–111; that stretch reads VVSVGMTDLG…PYGSWIIKVS (83 aa). K71 is modified (N6-lipoyllysine).

The protein belongs to the GcvH family. The glycine cleavage system is composed of four proteins: P, T, L and H. The cofactor is (R)-lipoate.

The glycine cleavage system catalyzes the degradation of glycine. The H protein shuttles the methylamine group of glycine from the P protein to the T protein. The sequence is that of Probable glycine cleavage system H protein 3 from Sulfolobus acidocaldarius (strain ATCC 33909 / DSM 639 / JCM 8929 / NBRC 15157 / NCIMB 11770).